Here is a 552-residue protein sequence, read N- to C-terminus: MIMFCVQCEQTIRTPAGNGCSYAQGMCGKTAETSDLQDLLIAALQGLSAWAVKACEYGIINHDVDSFAPRAFFSTLTNVNFDSPRIVGYAREAIALREALKAQCLAVDANARVDNPMADLQLVSDDLGELQRQAAEFTPNKDKAAIGENILGLRLLCLYGLKGAAAYMEHAHVLGQYDNDIYAQYHKIMAWLGTWPADMNALLECSMEIGQMNFKVMSILDAGETGKYGHPTPTQVNVKATAGKCILISGHDLKDLYNLLEQTEGTGVNVYTHGEMLPAHGYPELRKFKHLVGNYGSGWQNQQVEFARFPGPIVMTSNCIIDPTVGAYDDRIWTRSIVGWPGVRHLDGDDFSAVITQAQQMAGFPYSEIPHLITVGFGRQTLLGAADTLIDLVSREKLRHIFLLGGCDGARGERHYFTDFATSVPDDCLILTLACGKYRFNKLEFGDIEGLPRLVDAGQCNDAYSAIILAVTLAEKLGCGVNDLPLSLVLSWFEQKAIVILLTLLSLGVKNIVTGPTAPGFLTPDLLAVLNEKFGLRSITTVEEDMKQLLSA.

C5, C8, C20, and C27 together coordinate [2Fe-2S] cluster. Positions 251, 275, 319, 407, 435, 460, 494, and 496 each coordinate hybrid [4Fe-2O-2S] cluster. C407 carries the post-translational modification Cysteine persulfide.

It belongs to the HCP family. [2Fe-2S] cluster serves as cofactor. Requires hybrid [4Fe-2O-2S] cluster as cofactor.

It is found in the cytoplasm. It catalyses the reaction A + NH4(+) + H2O = hydroxylamine + AH2 + H(+). Functionally, catalyzes the reduction of hydroxylamine to form NH(3) and H(2)O. This is Hydroxylamine reductase from Shigella sonnei (strain Ss046).